The primary structure comprises 270 residues: tRNA pseudouridine synthase A (270 aa).

D60 functions as the Nucleophile in the catalytic mechanism. The segment at 107–111 (FHARF) is RNA binding. Residue Y118 participates in substrate binding. The interval 168-172 (QCQSR) is interaction with tRNA.

Belongs to the tRNA pseudouridine synthase TruA family. In terms of assembly, homodimer.

The enzyme catalyses uridine(38/39/40) in tRNA = pseudouridine(38/39/40) in tRNA. Its function is as follows. Formation of pseudouridine at positions 38, 39 and 40 in the anticodon stem and loop of transfer RNAs. This is tRNA pseudouridine synthase A from Shigella sonnei (strain Ss046).